Reading from the N-terminus, the 320-residue chain is Putative GDP-polyphosphate phosphotransferase PKK2A (320 aa).

Disordered stretches follow at residues 1–21, 246–267, and 281–320; these read MRKK…PKLD, RPLP…PPRD, and EERI…KSKK. The segment covering 12-21 has biased composition (basic and acidic residues); sequence DFRKNPPKLD. Residues 281–290 show a composition bias toward basic and acidic residues; sequence EERIKKEEKA.

Belongs to the polyphosphate kinase 2 (PPK2) family. Class I subfamily.

It carries out the reaction [phosphate](n) + GTP = [phosphate](n+1) + GDP. The polypeptide is Putative GDP-polyphosphate phosphotransferase PKK2A (Corynebacterium glutamicum (strain ATCC 13032 / DSM 20300 / JCM 1318 / BCRC 11384 / CCUG 27702 / LMG 3730 / NBRC 12168 / NCIMB 10025 / NRRL B-2784 / 534)).